The following is a 305-amino-acid chain: MRLVFAGTPRAAVPSLVRLHASGHEVALVVTRADAPTGRKRQLTPSPVAREAEGLGIPTLRTNRLDEEATARIAAVGAGLGVIVAYGGLVREPLLSTPARGWINLHFSLLPRWRGAAPVQRSIMAGETVTGASVFRLERGMDTGPVFAVEERPTGAHETAGDVLHALAMQGADLLVRTVDGIAAGSAVARPQEGEPTLAPKTSIADGRIDWARPADAVLAQIRGVTPEPGAFTSVDDVRVKVHRAAELRDAAPLDPGRIESVGGAVMVGTTSHPVELIQVQPAGKKPMPAADWWRGVTTRDITAR.

108-111 serves as a coordination point for (6S)-5,6,7,8-tetrahydrofolate; that stretch reads SLLP.

Belongs to the Fmt family.

The catalysed reaction is L-methionyl-tRNA(fMet) + (6R)-10-formyltetrahydrofolate = N-formyl-L-methionyl-tRNA(fMet) + (6S)-5,6,7,8-tetrahydrofolate + H(+). Its function is as follows. Attaches a formyl group to the free amino group of methionyl-tRNA(fMet). The formyl group appears to play a dual role in the initiator identity of N-formylmethionyl-tRNA by promoting its recognition by IF2 and preventing the misappropriation of this tRNA by the elongation apparatus. In Clavibacter michiganensis subsp. michiganensis (strain NCPPB 382), this protein is Methionyl-tRNA formyltransferase.